The primary structure comprises 120 residues: UPF0231 protein YacL (120 aa).

This sequence belongs to the UPF0231 family.

This Salmonella agona (strain SL483) protein is UPF0231 protein YacL.